Reading from the N-terminus, the 212-residue chain is Pyridoxine/pyridoxamine 5'-phosphate oxidase (212 aa).

Substrate contacts are provided by residues R7–Y10 and K65. Residues R60–K65, F75–T76, R81, K82, and Q104 contribute to the FMN site. The substrate site is built by Y122, R126, and S130. FMN contacts are provided by residues Q139–S140 and W184. Substrate is bound at residue R190 to H192. Residue R194 participates in FMN binding.

It belongs to the pyridoxamine 5'-phosphate oxidase family. In terms of assembly, homodimer. Requires FMN as cofactor.

The enzyme catalyses pyridoxamine 5'-phosphate + O2 + H2O = pyridoxal 5'-phosphate + H2O2 + NH4(+). The catalysed reaction is pyridoxine 5'-phosphate + O2 = pyridoxal 5'-phosphate + H2O2. It functions in the pathway cofactor metabolism; pyridoxal 5'-phosphate salvage; pyridoxal 5'-phosphate from pyridoxamine 5'-phosphate: step 1/1. It participates in cofactor metabolism; pyridoxal 5'-phosphate salvage; pyridoxal 5'-phosphate from pyridoxine 5'-phosphate: step 1/1. Catalyzes the oxidation of either pyridoxine 5'-phosphate (PNP) or pyridoxamine 5'-phosphate (PMP) into pyridoxal 5'-phosphate (PLP). This chain is Pyridoxine/pyridoxamine 5'-phosphate oxidase, found in Pseudoalteromonas translucida (strain TAC 125).